Reading from the N-terminus, the 89-residue chain is Small ribosomal subunit protein uS14A (89 aa).

This sequence belongs to the universal ribosomal protein uS14 family. Contacts proteins S3 and S10. Part of the 30S ribosomal subunit.

Its function is as follows. Binds 16S rRNA, required for the assembly of 30S particles and may also be responsible for determining the conformation of the 16S rRNA at the A site. Non-essential protein. A second form of uS14, it can integrate into the 30S subunit where it partially compensates for loss of the major uS14 protein (AC P12878) in restoring 70S formation, although it does not seem to be incorporated into the ribosome as well as the major uS14. The sequence is that of Small ribosomal subunit protein uS14A from Bacillus subtilis (strain 168).